Here is a 374-residue protein sequence, read N- to C-terminus: Methylthioribose-1-phosphate isomerase (374 aa).

The active-site Proton donor is aspartate 251.

Belongs to the eIF-2B alpha/beta/delta subunits family. MtnA subfamily.

It is found in the cytoplasm. It localises to the nucleus. It carries out the reaction 5-(methylsulfanyl)-alpha-D-ribose 1-phosphate = 5-(methylsulfanyl)-D-ribulose 1-phosphate. The protein operates within amino-acid biosynthesis; L-methionine biosynthesis via salvage pathway; L-methionine from S-methyl-5-thio-alpha-D-ribose 1-phosphate: step 1/6. Functionally, catalyzes the interconversion of methylthioribose-1-phosphate (MTR-1-P) into methylthioribulose-1-phosphate (MTRu-1-P). The chain is Methylthioribose-1-phosphate isomerase (IDI2) from Oryza sativa subsp. japonica (Rice).